The sequence spans 96 residues: NADH-ubiquinone oxidoreductase chain 4L (96 aa).

Helical transmembrane passes span 1–21, 24–44, and 57–77; these read MNPT…AFYQ, LLSL…LMAI, and LPLI…VLLV.

This sequence belongs to the complex I subunit 4L family.

The protein resides in the mitochondrion membrane. It carries out the reaction a ubiquinone + NADH + 5 H(+)(in) = a ubiquinol + NAD(+) + 4 H(+)(out). Its function is as follows. Core subunit of the mitochondrial membrane respiratory chain NADH dehydrogenase (Complex I) which catalyzes electron transfer from NADH through the respiratory chain, using ubiquinone as an electron acceptor. Part of the enzyme membrane arm which is embedded in the lipid bilayer and involved in proton translocation. This is NADH-ubiquinone oxidoreductase chain 4L (MT-ND4L) from Myxine glutinosa (Atlantic hagfish).